The following is a 355-amino-acid chain: Probable butyrate kinase (355 aa).

This sequence belongs to the acetokinase family.

The protein localises to the cytoplasm. It catalyses the reaction butanoate + ATP = butanoyl phosphate + ADP. In Listeria monocytogenes serovar 1/2a (strain ATCC BAA-679 / EGD-e), this protein is Probable butyrate kinase.